A 475-amino-acid polypeptide reads, in one-letter code: Bifunctional protein HldE (475 aa).

The ribokinase stretch occupies residues 1-318; it reads MMQYSPKFNN…ENAIHHREET (318 aa). Residue 195 to 198 participates in ATP binding; it reads NMSE. The active site involves aspartate 264. The interval 344 to 475 is cytidylyltransferase; it reads MTNGCFDILH…NVIKKIQASK (132 aa).

It in the N-terminal section; belongs to the carbohydrate kinase PfkB family. In the C-terminal section; belongs to the cytidylyltransferase family. In terms of assembly, homodimer.

The enzyme catalyses D-glycero-beta-D-manno-heptose 7-phosphate + ATP = D-glycero-beta-D-manno-heptose 1,7-bisphosphate + ADP + H(+). It carries out the reaction D-glycero-beta-D-manno-heptose 1-phosphate + ATP + H(+) = ADP-D-glycero-beta-D-manno-heptose + diphosphate. The protein operates within nucleotide-sugar biosynthesis; ADP-L-glycero-beta-D-manno-heptose biosynthesis; ADP-L-glycero-beta-D-manno-heptose from D-glycero-beta-D-manno-heptose 7-phosphate: step 1/4. Its pathway is nucleotide-sugar biosynthesis; ADP-L-glycero-beta-D-manno-heptose biosynthesis; ADP-L-glycero-beta-D-manno-heptose from D-glycero-beta-D-manno-heptose 7-phosphate: step 3/4. Functionally, catalyzes the phosphorylation of D-glycero-D-manno-heptose 7-phosphate at the C-1 position to selectively form D-glycero-beta-D-manno-heptose-1,7-bisphosphate. In terms of biological role, catalyzes the ADP transfer from ATP to D-glycero-beta-D-manno-heptose 1-phosphate, yielding ADP-D-glycero-beta-D-manno-heptose. This is Bifunctional protein HldE from Actinobacillus pleuropneumoniae serotype 5b (strain L20).